We begin with the raw amino-acid sequence, 308 residues long: Ribosomal RNA large subunit methyltransferase F (308 aa).

The protein belongs to the methyltransferase superfamily. METTL16/RlmF family.

The protein localises to the cytoplasm. It catalyses the reaction adenosine(1618) in 23S rRNA + S-adenosyl-L-methionine = N(6)-methyladenosine(1618) in 23S rRNA + S-adenosyl-L-homocysteine + H(+). Its function is as follows. Specifically methylates the adenine in position 1618 of 23S rRNA. This is Ribosomal RNA large subunit methyltransferase F from Escherichia coli (strain K12 / MC4100 / BW2952).